A 532-amino-acid chain; its full sequence is Membrane protein insertase YidC (532 aa).

5 consecutive transmembrane segments (helical) span residues 7–27, 336–356, 413–433, 450–470, and 492–512; these read FFIF…QSQM, LTIL…ITFI, GGFL…YMLI, LSSQ…MFFI, and PVIF…YYII.

This sequence belongs to the OXA1/ALB3/YidC family. Type 1 subfamily. Interacts with the Sec translocase complex via SecD. Specifically interacts with transmembrane segments of nascent integral membrane proteins during membrane integration.

The protein resides in the cell membrane. Its function is as follows. Required for the insertion and/or proper folding and/or complex formation of integral membrane proteins into the membrane. Involved in integration of membrane proteins that insert both dependently and independently of the Sec translocase complex, as well as at least some lipoproteins. Aids folding of multispanning membrane proteins. The sequence is that of Membrane protein insertase YidC from Buchnera aphidicola subsp. Acyrthosiphon pisum (strain Tuc7).